A 35-amino-acid polypeptide reads, in one-letter code: Photosystem II reaction center protein T (35 aa).

Residues 3–23 (ALVYTFLLVSTLGIIFFAIFF) form a helical membrane-spanning segment.

Belongs to the PsbT family. As to quaternary structure, PSII is composed of 1 copy each of membrane proteins PsbA, PsbB, PsbC, PsbD, PsbE, PsbF, PsbH, PsbI, PsbJ, PsbK, PsbL, PsbM, PsbT, PsbY, PsbZ, Psb30/Ycf12, at least 3 peripheral proteins of the oxygen-evolving complex and a large number of cofactors. It forms dimeric complexes.

It is found in the plastid. The protein localises to the chloroplast thylakoid membrane. In terms of biological role, found at the monomer-monomer interface of the photosystem II (PS II) dimer, plays a role in assembly and dimerization of PSII. PSII is a light-driven water plastoquinone oxidoreductase, using light energy to abstract electrons from H(2)O, generating a proton gradient subsequently used for ATP formation. This chain is Photosystem II reaction center protein T, found in Pinus thunbergii (Japanese black pine).